The sequence spans 152 residues: Kininogen-1c (152 aa).

The N-terminal stretch at 1 to 23 (MRLWFCLSLFIVLCLEHFPGTLA) is a signal peptide. Positions 28–44 (VPESEEKTEQFLRDLPK) are enriched in basic and acidic residues. The segment at 28–152 (VPESEEKTEQ…RGKFHSQSHV (125 aa)) is disordered.

Belongs to the bradykinin-related peptide family. Expressed by the skin glands.

Its subcellular location is the secreted. In terms of biological role, potent vasodilator. Binds B1 (BDKRB1) and B2 (BDKRB2) bradykinin receptors. The protein is Kininogen-1c of Bombina maxima (Giant fire-bellied toad).